We begin with the raw amino-acid sequence, 293 residues long: Large ribosomal subunit protein uL18 (293 aa).

Basic and acidic residues predominate over residues 247-263 (IRANPAHEKKQPRDGLV). The tract at residues 247 to 283 (IRANPAHEKKQPRDGLVKKRWNRAKMSLKQKRDRVKQ) is disordered. Residues 264–283 (KKRWNRAKMSLKQKRDRVKQ) are compositionally biased toward basic residues.

The protein belongs to the universal ribosomal protein uL18 family. As to quaternary structure, component of the large ribosomal subunit (LSU).

The protein localises to the cytoplasm. Its subcellular location is the nucleus. In terms of biological role, component of the ribosome, a large ribonucleoprotein complex responsible for the synthesis of proteins in the cell. The small ribosomal subunit (SSU) binds messenger RNAs (mRNAs) and translates the encoded message by selecting cognate aminoacyl-transfer RNA (tRNA) molecules. The large subunit (LSU) contains the ribosomal catalytic site termed the peptidyl transferase center (PTC), which catalyzes the formation of peptide bonds, thereby polymerizing the amino acids delivered by tRNAs into a polypeptide chain. The nascent polypeptides leave the ribosome through a tunnel in the LSU and interact with protein factors that function in enzymatic processing, targeting, and the membrane insertion of nascent chains at the exit of the ribosomal tunnel. This is Large ribosomal subunit protein uL18 (RPL5) from Suberites domuncula (Sponge).